A 334-amino-acid polypeptide reads, in one-letter code: Glycerol-3-phosphate dehydrogenase [NAD(P)+] (334 aa).

NADPH contacts are provided by Trp13, Arg33, and Lys106. Residues Lys106, Gly137, and Ser139 each coordinate sn-glycerol 3-phosphate. Ala141 lines the NADPH pocket. Residues Lys192, Asp245, Ser255, Arg256, and Asn257 each contribute to the sn-glycerol 3-phosphate site. The active-site Proton acceptor is Lys192. An NADPH-binding site is contributed by Arg256. Residues Val280 and Glu282 each coordinate NADPH.

Belongs to the NAD-dependent glycerol-3-phosphate dehydrogenase family.

It localises to the cytoplasm. The enzyme catalyses sn-glycerol 3-phosphate + NAD(+) = dihydroxyacetone phosphate + NADH + H(+). It carries out the reaction sn-glycerol 3-phosphate + NADP(+) = dihydroxyacetone phosphate + NADPH + H(+). Its pathway is membrane lipid metabolism; glycerophospholipid metabolism. Catalyzes the reduction of the glycolytic intermediate dihydroxyacetone phosphate (DHAP) to sn-glycerol 3-phosphate (G3P), the key precursor for phospholipid synthesis. This is Glycerol-3-phosphate dehydrogenase [NAD(P)+] from Chlamydia abortus (strain DSM 27085 / S26/3) (Chlamydophila abortus).